The sequence spans 359 residues: Protein RecA (359 aa).

Residue 69 to 76 (GPESSGKT) participates in ATP binding. The tract at residues 337 to 359 (SANSVAKASEEDEEEEVDLEPEE) is disordered. A compositionally biased stretch (acidic residues) spans 346–359 (EEDEEEEVDLEPEE).

It belongs to the RecA family.

It localises to the cytoplasm. Its function is as follows. Can catalyze the hydrolysis of ATP in the presence of single-stranded DNA, the ATP-dependent uptake of single-stranded DNA by duplex DNA, and the ATP-dependent hybridization of homologous single-stranded DNAs. It interacts with LexA causing its activation and leading to its autocatalytic cleavage. The chain is Protein RecA from Nostoc punctiforme (strain ATCC 29133 / PCC 73102).